Here is a 360-residue protein sequence, read N- to C-terminus: MAQLSLQHIQKIYDNQVHVVKDFNLEIADKEFIVFVGPSGCGKSTTLRMIAGLEEISGGDLLIDGKRMNDVPAKARNIAMVFQNYALYPHMTVYDNMAFGLKMQKIAKEVIDERVNWAAQILGLREYLKRKPGALSGGQRQRVALGRAIVREAGVFLMDEPLSNLDAKLRVQMRAEISKLHQKLNTTMIYVTHDQTEAMTMATRIVIMKDGIVQQVGAPKTVYNQPANMFVSGFIGSPAMNFIRGTIDGDKFVTETLKLTIPEEKLAVLKTQESLHKPIVMGIRPEDIHPDAQEENNISAKISVAELTGAEFMLYTTVGGHELVVRAGALNDYHAGENITIHFDMTKCHFFDAETEIAIR.

An ABC transporter domain is found at 4-235; it reads LSLQHIQKIY…PANMFVSGFI (232 aa). 37–44 serves as a coordination point for ATP; that stretch reads GPSGCGKS.

The protein belongs to the ABC transporter superfamily.

This is an uncharacterized protein from Escherichia coli (strain K12).